Reading from the N-terminus, the 80-residue chain is RNA-binding protein Hfq (80 aa).

Residues 10 to 70 (DLFLNTVRKQ…ISTIMPGQPM (61 aa)) enclose the Sm domain.

Belongs to the Hfq family. In terms of assembly, homohexamer.

RNA chaperone that binds small regulatory RNA (sRNAs) and mRNAs to facilitate mRNA translational regulation in response to envelope stress, environmental stress and changes in metabolite concentrations. Also binds with high specificity to tRNAs. The protein is RNA-binding protein Hfq of Rhizobium etli (strain CIAT 652).